The sequence spans 894 residues: Probable ion channel SYM8 (894 aa).

Residues 1 to 124 (MAKSNEEPNS…PPSLPIAITK (124 aa)) form a disordered region. 3 stretches are compositionally biased toward polar residues: residues 7–16 (EPNSNLNTNK), 24–33 (TLAQQPSLNL), and 44–63 (IGNS…QRNY). The next 4 helical transmembrane spans lie at 134-154 (SPIF…SAFL), 204-224 (TISL…YKYI), 267-287 (LALL…LYAV), and 319-339 (IVSV…LGLV). RCK N-terminal domains lie at 360–501 (RNHV…ETVV) and 620–769 (PEKI…DKSI). Residues 390-415 (VIVVLAEKEKEEMEMDIAKLEFDFMG) are a coiled coil.

Belongs to the castor/pollux (TC 1.A.1.23) family. In terms of assembly, homotetramer.

It is found in the nucleus membrane. Functionally, required for both rhizobial and mycorrhizal symbiosis. Involved in Nod-factor-induced calcium spiking. May induce a change in membrane polarization that activates the opening of a calcium channel required for calcium spiking. Might be calcium gated. The protein is Probable ion channel SYM8 (SYM8) of Pisum sativum (Garden pea).